Here is an 83-residue protein sequence, read N- to C-terminus: U4-theraphotoxin-Hhn1x (83 aa).

An N-terminal signal peptide occupies residues 1–20; it reads MTLIAILTCAAALVLHTTAA. Residues 21–46 constitute a propeptide that is removed on maturation; the sequence is EELEAESQLMEVGMPDTELEAVDEER. 3 cysteine pairs are disulfide-bonded: Cys-50–Cys-64, Cys-54–Cys-75, and Cys-69–Cys-80.

This sequence belongs to the neurotoxin 12 (Hwtx-2) family. 02 (Hwtx-2) subfamily. In terms of tissue distribution, expressed by the venom gland.

It localises to the secreted. In terms of biological role, postsynaptic neurotoxin. The sequence is that of U4-theraphotoxin-Hhn1x from Cyriopagopus hainanus (Chinese bird spider).